We begin with the raw amino-acid sequence, 330 residues long: uncharacterized protein (330 aa).

125–132 (GPPGCGKT) contributes to the ATP binding site.

It belongs to the AAA ATPase family.

This is an uncharacterized protein from Sinorhizobium fredii (strain NBRC 101917 / NGR234).